A 225-amino-acid polypeptide reads, in one-letter code: Protein-L-isoaspartate O-methyltransferase (225 aa).

Ser75 is a catalytic residue.

This sequence belongs to the methyltransferase superfamily. L-isoaspartyl/D-aspartyl protein methyltransferase family.

The protein localises to the cytoplasm. It catalyses the reaction [protein]-L-isoaspartate + S-adenosyl-L-methionine = [protein]-L-isoaspartate alpha-methyl ester + S-adenosyl-L-homocysteine. Catalyzes the methyl esterification of L-isoaspartyl residues in peptides and proteins that result from spontaneous decomposition of normal L-aspartyl and L-asparaginyl residues. It plays a role in the repair and/or degradation of damaged proteins. The sequence is that of Protein-L-isoaspartate O-methyltransferase from Stenotrophomonas maltophilia (strain R551-3).